A 1478-amino-acid chain; its full sequence is Fanconi anemia group D2 protein homolog (1478 aa).

A disordered region spans residues 33–53 (NISVESSSGGSEENIPASQEH). A compositionally biased stretch (low complexity) spans 35–45 (SVESSSGGSEE). A Glycyl lysine isopeptide (Lys-Gly) (interchain with G-Cter in ubiquitin) cross-link involves residue Lys-595. Disordered regions lie at residues 896–918 (NQNQ…PEPD) and 1420–1478 (TPRS…SKCF). The segment covering 1429–1442 (ENSDDELPADDTSV) has biased composition (acidic residues). The segment covering 1468–1478 (RSKSSSRSKCF) has biased composition (basic residues).

This sequence belongs to the Fanconi anemia protein FANCD2 family. Homodimer; cannot be ubiquitinated and does not bind DNA. Part of a Fanci-Fancd2 heterodimeric complex that binds and scans dsDNA for DNA damage. Interacts with Fancl (via C-terminus). Monoubiquitinated by Fancl in response to ionising radiation.

It is found in the nucleus. Required for maintenance of chromosomal stability. Together with Fancl, and probably Fanci, involved in DNA repair of damage caused by agents that induce interstrand cross-links but not agents that cause double strand breaks. Required for S phase checkpoint activation in response to ionizing radiation induced DNA damage. The protein is Fanconi anemia group D2 protein homolog of Drosophila melanogaster (Fruit fly).